A 124-amino-acid polypeptide reads, in one-letter code: Small ribosomal subunit protein uS12 (124 aa).

Position 89 is a 3-methylthioaspartic acid (Asp89).

This sequence belongs to the universal ribosomal protein uS12 family. As to quaternary structure, part of the 30S ribosomal subunit. Contacts proteins S8 and S17. May interact with IF1 in the 30S initiation complex.

Its function is as follows. With S4 and S5 plays an important role in translational accuracy. Functionally, interacts with and stabilizes bases of the 16S rRNA that are involved in tRNA selection in the A site and with the mRNA backbone. Located at the interface of the 30S and 50S subunits, it traverses the body of the 30S subunit contacting proteins on the other side and probably holding the rRNA structure together. The combined cluster of proteins S8, S12 and S17 appears to hold together the shoulder and platform of the 30S subunit. This is Small ribosomal subunit protein uS12 from Hamiltonella defensa subsp. Acyrthosiphon pisum (strain 5AT).